Consider the following 200-residue polypeptide: Translation machinery-associated protein 22 (200 aa).

An SUI1 domain is found at 95 to 166; the sequence is VVIRREARTK…EVEAYIHSLL (72 aa).

This sequence belongs to the DENR family. As to quaternary structure, interacts with the 40S ribosomal subunit.

The protein resides in the cytoplasm. This is Translation machinery-associated protein 22 (TMA22) from Kluyveromyces lactis (strain ATCC 8585 / CBS 2359 / DSM 70799 / NBRC 1267 / NRRL Y-1140 / WM37) (Yeast).